The primary structure comprises 325 residues: Prenytransferase adrG (325 aa).

Helical transmembrane passes span Leu47–Leu67, Met71–Ile91, Ala117–Trp137, Pro163–Leu183, Met189–Ile209, Leu236–Thr256, and Leu258–Leu278.

Belongs to the UbiA prenyltransferase family. It depends on Mg(2+) as a cofactor.

The protein resides in the membrane. It carries out the reaction 3,5-dimethylorsellinate + (2E,6E)-farnesyl diphosphate = (3R)-3-farnesyl-6-hydroxy-2,3,5-trimethyl-4-oxocyclohexa-1,5-diene-1-carboxylate + diphosphate + H(+). Its pathway is secondary metabolite biosynthesis; terpenoid biosynthesis. Functionally, prenytransferase; part of the gene cluster that mediates the biosynthesis of andrastins, meroterpenoid compounds that exhibit inhibitory activity against ras farnesyltransferase, suggesting that they could be promising leads for antitumor agents. The first step of the pathway is the synthesis of 3,5-dimethylorsellinic acid (DMOA) by the polyketide synthase adrD via condensation of one acetyl-CoA starter unit with 3 malonyl-CoA units and 2 methylations. DMAO is then converted to farnesyl-DMAO by the prenyltransferase adrG. The methyltransferase adrK catalyzes the methylation of the carboxyl group of farnesyl-DMAO to farnesyl-DMAO methyl ester which is further converted to epoxyfarnesyl-DMAO methyl ester by the FAD-dependent monooxygenase adrH. The terpene cyclase adrI then catalyzes the carbon skeletal rearrangement to generate the andrastin E, the first compound in the pathway having the andrastin scaffold, with the tetracyclic ring system. The post-cyclization tailoring enzymes adrF, adrE, adrJ, and adrA, are involved in the conversion of andrastin E into andrastin A. The short chain dehydrogenase adrF is responsible for the oxidation of the C-3 a hydroxyl group of andrastin E to yield the corresponding ketone, andrastin D. The ketoreductase adrE stereoselectively reduces the carbonyl moiety to reverse the stereochemistry of the C-3 position to yield andrastin F. The acetyltransferase adrJ is the acetyltransferase that attaches the acetyl group to the C-3 hydroxyl group of andrastin F to yield andrastin C. Finally, the cytochrome P450 monooxygenase adrA catalyzes two sequential oxidation reactions of the C-23 methyl group, to generate the corresponding alcohol andrastin B, and aldehyde andrastin A. The protein is Prenytransferase adrG of Penicillium rubens (strain ATCC 28089 / DSM 1075 / NRRL 1951 / Wisconsin 54-1255) (Penicillium chrysogenum).